The chain runs to 216 residues: Imidazole glycerol phosphate synthase subunit HisH (216 aa).

Residues 5-213 (RLAVIDYDAG…VEFVARRLPA (209 aa)) enclose the Glutamine amidotransferase type-1 domain. The active-site Nucleophile is the cysteine 83. Catalysis depends on residues histidine 188 and glutamate 190.

As to quaternary structure, heterodimer of HisH and HisF.

The protein localises to the cytoplasm. The catalysed reaction is 5-[(5-phospho-1-deoxy-D-ribulos-1-ylimino)methylamino]-1-(5-phospho-beta-D-ribosyl)imidazole-4-carboxamide + L-glutamine = D-erythro-1-(imidazol-4-yl)glycerol 3-phosphate + 5-amino-1-(5-phospho-beta-D-ribosyl)imidazole-4-carboxamide + L-glutamate + H(+). It catalyses the reaction L-glutamine + H2O = L-glutamate + NH4(+). It functions in the pathway amino-acid biosynthesis; L-histidine biosynthesis; L-histidine from 5-phospho-alpha-D-ribose 1-diphosphate: step 5/9. IGPS catalyzes the conversion of PRFAR and glutamine to IGP, AICAR and glutamate. The HisH subunit catalyzes the hydrolysis of glutamine to glutamate and ammonia as part of the synthesis of IGP and AICAR. The resulting ammonia molecule is channeled to the active site of HisF. The chain is Imidazole glycerol phosphate synthase subunit HisH from Synechococcus sp. (strain JA-3-3Ab) (Cyanobacteria bacterium Yellowstone A-Prime).